A 195-amino-acid chain; its full sequence is Glycerol-3-phosphate acyltransferase (195 aa).

The next 6 helical transmembrane spans lie at 2–22, 54–74, 80–100, 107–127, 132–152, and 155–175; these read IFFS…SSAI, IAIS…WLGY, PIFL…PIFF, GVAT…IVMI, LTVL…FIIP, and AWHF…LVVI.

It belongs to the PlsY family. Probably interacts with PlsX.

The protein resides in the cell inner membrane. It catalyses the reaction an acyl phosphate + sn-glycerol 3-phosphate = a 1-acyl-sn-glycero-3-phosphate + phosphate. It participates in lipid metabolism; phospholipid metabolism. Catalyzes the transfer of an acyl group from acyl-phosphate (acyl-PO(4)) to glycerol-3-phosphate (G3P) to form lysophosphatidic acid (LPA). This enzyme utilizes acyl-phosphate as fatty acyl donor, but not acyl-CoA or acyl-ACP. The chain is Glycerol-3-phosphate acyltransferase from Blochmanniella pennsylvanica (strain BPEN).